The sequence spans 351 residues: MPGAAAKGSELSERIESFVETLKRGGGRRTSEDMARETLGLLRRLITDHHWNNAGDLMDLIRREGRRMTAAHPPETTVGNMVRRVLKIIREEYGRLHGRSDESDQQESLHKLLTSGGLSEDFSFHYAPLKSNIIEAINELLVELEGTTENIAAQALEHIHSNEVIMTIGFSRTVEAFLREAAQKRKFHVIAAECAPFCQGHEMAVNLSEAGIETTVMTDAAIFAVMSRVNKVIIGTKTILANGSLRAVAGTHTLALAAKHHSTPLIVCAPMFKLSPQFPSEEDSFHKFVAPEEVLPFTEGDILEKVSVHCPVFDYVPPDLITLFISNIGGNAPSYVYRLMSELYHPDDHVL.

It belongs to the eIF-2B alpha/beta/delta subunits family. In terms of assembly, component of the translation initiation factor 2B (eIF2B) complex which is a heterodecamer of two sets of five different subunits: alpha, beta, gamma, delta and epsilon. Subunits alpha, beta and delta comprise a regulatory subcomplex and subunits epsilon and gamma comprise a catalytic subcomplex. Within the complex, the hexameric regulatory complex resides at the center, with the two heterodimeric catalytic subcomplexes bound on opposite sides.

The protein localises to the cytoplasm. Its subcellular location is the cytosol. With respect to regulation, activated by the chemical integrated stress response (ISR) inhibitor ISRIB which stimulates guanine nucleotide exchange factor activity for both phosphorylated and unphosphorylated eIF2. Functionally, acts as a component of the translation initiation factor 2B (eIF2B) complex, which catalyzes the exchange of GDP for GTP on eukaryotic initiation factor 2 (eIF2) gamma subunit. Its guanine nucleotide exchange factor activity is repressed when bound to eIF2 complex phosphorylated on the alpha subunit, thereby limiting the amount of methionyl-initiator methionine tRNA available to the ribosome and consequently global translation is repressed. This Rattus norvegicus (Rat) protein is Translation initiation factor eIF2B subunit beta (Eif2b2).